The following is a 211-amino-acid chain: Probable cytokinin riboside 5'-monophosphate phosphoribohydrolase LOGL3 (211 aa).

Substrate-binding positions include Glu84, 102 to 103 (RK), 119 to 125 (GYGTLEE), and Thr131.

This sequence belongs to the LOG family. As to expression, expressed in roots, leaves, stems, tiller buds, shoot apex, immature inflorescences and flowers.

It catalyses the reaction N(6)-(dimethylallyl)adenosine 5'-phosphate + H2O = N(6)-dimethylallyladenine + D-ribose 5-phosphate. The enzyme catalyses 9-ribosyl-trans-zeatin 5'-phosphate + H2O = trans-zeatin + D-ribose 5-phosphate. Cytokinin-activating enzyme working in the direct activation pathway. Phosphoribohydrolase that converts inactive cytokinin nucleotides to the biologically active free-base forms. The protein is Probable cytokinin riboside 5'-monophosphate phosphoribohydrolase LOGL3 (LOGL3) of Oryza sativa subsp. japonica (Rice).